A 463-amino-acid polypeptide reads, in one-letter code: ATP-dependent protease ATPase subunit HslU (463 aa).

Residues isoleucine 19 and 61-66 (GVGKTE) contribute to the ATP site. The segment at 154–175 (FGGNQNSNQTSDAQEDDEIEKK) is disordered. Residues 156 to 165 (GNQNSNQTSD) show a composition bias toward polar residues. Residues aspartate 277, glutamate 341, and arginine 413 each contribute to the ATP site.

It belongs to the ClpX chaperone family. HslU subfamily. In terms of assembly, a double ring-shaped homohexamer of HslV is capped on each side by a ring-shaped HslU homohexamer. The assembly of the HslU/HslV complex is dependent on binding of ATP.

The protein localises to the cytoplasm. In terms of biological role, ATPase subunit of a proteasome-like degradation complex; this subunit has chaperone activity. The binding of ATP and its subsequent hydrolysis by HslU are essential for unfolding of protein substrates subsequently hydrolyzed by HslV. HslU recognizes the N-terminal part of its protein substrates and unfolds these before they are guided to HslV for hydrolysis. This is ATP-dependent protease ATPase subunit HslU from Bacillus mycoides (strain KBAB4) (Bacillus weihenstephanensis).